Consider the following 484-residue polypeptide: Nuclear rim protein 1 (484 aa).

The residue at position 3 (S3) is a Phosphoserine. The next 2 helical transmembrane spans lie at 145–165 (FTIFILLSLNLYVSCKFMFGY) and 252–272 (TAIVFLSFSDVSFTSAIAIVF). Positions 416–457 (SSNENLEKGGAYLPNQDQNRPSKSLSPLRKTPLSARQKRFEG) are disordered. Phosphoserine is present on S417. Polar residues predominate over residues 430–440 (NQDQNRPSKSL). The residue at position 474 (S474) is a Phosphoserine.

This sequence belongs to the NUR1 family. Interacts with CSM1.

It is found in the nucleus membrane. Functionally, member of a perinuclear network that controls recombination at multiple loci to maintain genome stability. Required for rDNA repeat stability. The sequence is that of Nuclear rim protein 1 (NUR1) from Saccharomyces cerevisiae (strain ATCC 204508 / S288c) (Baker's yeast).